Consider the following 615-residue polypeptide: Melanopsin-B (615 aa).

Residues 1–19 (MDMDRGFYRKVDVPDHAHY) lie on the Extracellular side of the membrane. A helical membrane pass occupies residues 20 to 40 (VIAFFVLIIGVVGVTGNALVM). Topologically, residues 41–56 (YAFLCNKKLRTPPNYF) are cytoplasmic. Residues 57–77 (IMNLAVSDFLMAITQSPIFFI) form a helical membrane-spanning segment. The Extracellular segment spans residues 78 to 93 (NSLFKEWIFGETGCRM). Cysteines 91 and 169 form a disulfide. Residues 94-114 (YAFCGALFGITSMINLLAISL) form a helical membrane-spanning segment. The Cytoplasmic portion of the chain corresponds to 115–136 (DRYIVITKPPQAIRWVSGRRTM). Residues 137–157 (VVILLVWLYSLAWSLAPLLGW) form a helical membrane-spanning segment. Over 158–189 (SSYIPEGLMTSCTWDYVTSTPANKGYTLMLCC) the chain is Extracellular. A helical membrane pass occupies residues 190–210 (FVFFIPLGIISYCYLCMFLAI). Over 211–244 (RSAGREIERLGTQVRKSTLMQQQTIKTEWKLTKV) the chain is Cytoplasmic. A helical transmembrane segment spans residues 245–265 (AFVVIIVYVHSWSPYACVTLI). The Extracellular segment spans residues 266–279 (AWAGYGSHLSPYSK). Residues 280–300 (AVPAVIAKASAIYNPFIYAII) traverse the membrane as a helical segment. At lysine 287 the chain carries N6-(retinylidene)lysine. Residues 301 to 615 (HSKYRDTLAE…RNLEESFMAL (315 aa)) are Cytoplasmic-facing. Disordered regions lie at residues 390-420 (LGRSKEHRGPPAQQNRQTRSSDTLEQATVAD) and 465-502 (NKHPNNNHKNHNNRHNGNNNNEEHEYSGKGGRHCQNHP). Residues 401-415 (AQQNRQTRSSDTLEQ) are compositionally biased toward polar residues. Residues 469-478 (NNNHKNHNNR) show a composition bias toward basic residues.

It belongs to the G-protein coupled receptor 1 family. Opsin subfamily. In terms of tissue distribution, expressed in the inner nuclear layer of the retina, possibly in amacrine and ganglion cells. Expressed in a subpopulation of neurons in the dorsal habenula.

It localises to the cell membrane. Its function is as follows. Photoreceptor implicated in non-image-forming responses to light. This is Melanopsin-B (opn4b) from Gadus morhua (Atlantic cod).